The following is a 670-amino-acid chain: Protein-glutamine gamma-glutamyltransferase 4 (670 aa).

Asn-151 and Asn-219 each carry an N-linked (GlcNAc...) asparagine glycan. Cys-255 is a catalytic residue. The N-linked (GlcNAc...) asparagine glycan is linked to Asn-288. Residues His-314 and Asp-337 contribute to the active site. Ca(2+)-binding residues include Asn-377, Asp-379, Glu-429, and Glu-434. 2 N-linked (GlcNAc...) asparagine glycosylation sites follow: Asn-456 and Asn-491.

The protein belongs to the transglutaminase superfamily. Transglutaminase family. In terms of assembly, homodimer. The cofactor is Ca(2+). Expressed in the coagulating gland and in the dorsal part of the prostate. Not expressed in the brain, heart, kidney, liver, lung, muscle, pancreas, spleen, stomach, testis and thymus.

It localises to the secreted. The enzyme catalyses L-glutaminyl-[protein] + L-lysyl-[protein] = [protein]-L-lysyl-N(6)-5-L-glutamyl-[protein] + NH4(+). Its function is as follows. Associated with the mammalian reproductive process. Plays an important role in the formation of the seminal coagulum through the cross-linking of specific proteins present in the seminal plasma. Transglutaminase is also required to stabilize the copulatory plug. This is Protein-glutamine gamma-glutamyltransferase 4 from Mus musculus (Mouse).